A 373-amino-acid chain; its full sequence is Transaldolase (373 aa).

The active-site Schiff-base intermediate with substrate is the lysine 143.

The protein belongs to the transaldolase family. Type 2 subfamily.

It localises to the cytoplasm. The enzyme catalyses D-sedoheptulose 7-phosphate + D-glyceraldehyde 3-phosphate = D-erythrose 4-phosphate + beta-D-fructose 6-phosphate. Its pathway is carbohydrate degradation; pentose phosphate pathway; D-glyceraldehyde 3-phosphate and beta-D-fructose 6-phosphate from D-ribose 5-phosphate and D-xylulose 5-phosphate (non-oxidative stage): step 2/3. Its function is as follows. Transaldolase is important for the balance of metabolites in the pentose-phosphate pathway. In Mycobacterium tuberculosis (strain ATCC 25618 / H37Rv), this protein is Transaldolase (tal).